A 476-amino-acid chain; its full sequence is Stromelysin-2 (476 aa).

A signal peptide spans 1–17; the sequence is MEPLAILVLLCFPICSA. Residues 18 to 99 constitute a propeptide, activation peptide; sequence YPLHGAVRQD…PRCGVPDVGG (82 aa). The Cysteine switch signature appears at 90-97; it reads PRCGVPDV. Zn(2+) contacts are provided by cysteine 92, histidine 168, aspartate 170, histidine 183, histidine 196, and histidine 218. Residue glutamate 219 is part of the active site. Zn(2+)-binding residues include histidine 222 and histidine 228. 4 Hemopexin repeats span residues 286–335, 336–382, 384–432, and 433–476; these read PVKC…WPSL, PSGL…GFPP, VKKI…FPGI, and EPQV…WLLC. The cysteines at positions 289 and 476 are disulfide-linked.

The protein belongs to the peptidase M10A family. The cofactor is Zn(2+). It depends on Ca(2+) as a cofactor.

The protein localises to the secreted. It is found in the extracellular space. The protein resides in the extracellular matrix. It carries out the reaction Similar to stromelysin 1, but action on collagen types III, IV and V is weak.. Can degrade fibronectin, gelatins of type I, III, IV, and V; weakly collagens III, IV, and V. Activates procollagenase. This is Stromelysin-2 (Mmp10) from Rattus norvegicus (Rat).